The primary structure comprises 362 residues: Homeobox-leucine zipper protein HOX11 (362 aa).

The segment covering 27 to 45 has biased composition (basic and acidic residues); sequence REEAAEAGRRDHEVRRELE. A disordered region spans residues 27–179; that stretch reads REEAAEAGRR…DDGGSARKKL (153 aa). A compositionally biased stretch (low complexity) spans 64-75; the sequence is LTLLPMVPGLGL. Residues 126–135 show a composition bias toward polar residues; that stretch reads LSSSPNNSAG. Positions 145–160 are enriched in gly residues; that stretch reads HGLGGNDAAPGGGGGD. Residues 174-233 constitute a DNA-binding region (homeobox); sequence SARKKLRLSKEQSAFLEESFKEHSTLNPKQKLALAKQLNLRPRQVEVWFQNRRARTKLKQ. The interval 232–276 is leucine-zipper; sequence KQTEVDCEYLKRCCETLTEENRRLQKELAELRALKTVHPFYMHLP. The tract at residues 301-330 is disordered; it reads AATSSTAAPPAAPSSGGIAATSSSAAAAAA.

The protein belongs to the HD-ZIP homeobox family. Class II subfamily. In terms of tissue distribution, expressed in stems, leaf sheaths and blades and panicles.

It is found in the nucleus. Its function is as follows. Probable transcription factor. In Oryza sativa subsp. japonica (Rice), this protein is Homeobox-leucine zipper protein HOX11 (HOX11).